Reading from the N-terminus, the 430-residue chain is Enolase (430 aa).

Position 168 (glutamine 168) interacts with (2R)-2-phosphoglycerate. Residue glutamate 210 is the Proton donor of the active site. The Mg(2+) site is built by aspartate 247, glutamate 288, and aspartate 315. Residues lysine 340, arginine 369, serine 370, and lysine 391 each contribute to the (2R)-2-phosphoglycerate site. Lysine 340 acts as the Proton acceptor in catalysis.

This sequence belongs to the enolase family. Requires Mg(2+) as cofactor.

It localises to the cytoplasm. The protein resides in the secreted. Its subcellular location is the cell surface. It catalyses the reaction (2R)-2-phosphoglycerate = phosphoenolpyruvate + H2O. The protein operates within carbohydrate degradation; glycolysis; pyruvate from D-glyceraldehyde 3-phosphate: step 4/5. Catalyzes the reversible conversion of 2-phosphoglycerate (2-PG) into phosphoenolpyruvate (PEP). It is essential for the degradation of carbohydrates via glycolysis. This is Enolase from Picosynechococcus sp. (strain ATCC 27264 / PCC 7002 / PR-6) (Agmenellum quadruplicatum).